The chain runs to 363 residues: MIIDTTEVQAINSFSILESLKEVYGIIWMLIPIFTLVLGITIGVLVIVWLEREISAGIQQRIGPEYAGPLGILQALADGTKLLFKENLLPSRGDTRLFSIGPSIAVISILLSYLVIPFSYHLVLADLSIGVFLWIAISSIAPVGLLMSGYGSNNKYSFLGGLRAAAQSISYEIPLTLCVLSISLLSNSSSTVDIVEAQSKYGFWGWNLWRQPIGFLVFLISSLAECERLPFDLPEAEEELVAGYQTEYSGIKFGLFYVASYLNLLVSSLFVTVLYLGGWNLSIPYIFVPEVFEITKRGRVFGTIIGIFITLAKTYLFLFIPIATRWTLPRLRMDQLLNLGWKFLLPISLGNLLLTTCSQLISL.

6 helical membrane-spanning segments follow: residues 30 to 50, 104 to 124, 127 to 147, 248 to 268, 300 to 320, and 343 to 363; these read LIPI…IVWL, IAVI…HLVL, LSIG…GLLM, YSGI…LVSS, VFGT…FLFI, and FLLP…LISL.

This sequence belongs to the complex I subunit 1 family. In terms of assembly, NDH is composed of at least 16 different subunits, 5 of which are encoded in the nucleus.

The protein resides in the plastid. It is found in the chloroplast thylakoid membrane. It carries out the reaction a plastoquinone + NADH + (n+1) H(+)(in) = a plastoquinol + NAD(+) + n H(+)(out). The catalysed reaction is a plastoquinone + NADPH + (n+1) H(+)(in) = a plastoquinol + NADP(+) + n H(+)(out). Functionally, NDH shuttles electrons from NAD(P)H:plastoquinone, via FMN and iron-sulfur (Fe-S) centers, to quinones in the photosynthetic chain and possibly in a chloroplast respiratory chain. The immediate electron acceptor for the enzyme in this species is believed to be plastoquinone. Couples the redox reaction to proton translocation, and thus conserves the redox energy in a proton gradient. The sequence is that of NAD(P)H-quinone oxidoreductase subunit 1, chloroplastic from Lactuca sativa (Garden lettuce).